The sequence spans 457 residues: Fibrinogen C domain-containing protein 1-A (457 aa).

The segment at Met-1 to Gln-20 is disordered. Over Met-1–Cys-33 the chain is Cytoplasmic. Residues Thr-34 to Met-54 form a helical; Signal-anchor for type II membrane protein membrane-spanning segment. At Asn-55–Asn-457 the chain is on the extracellular side. A disordered region spans residues Ala-216–Ser-235. In terms of domain architecture, Fibrinogen C-terminal spans Cys-231–Arg-454. A glycan (N-linked (GlcNAc...) asparagine) is linked at Asn-233. A disulfide bond links Cys-240 and Cys-269. Residue Asn-336 is glycosylated (N-linked (GlcNAc...) asparagine). The Ca(2+) site is built by Asp-389 and Asp-391. A disulfide bridge connects residues Cys-397 and Cys-410.

As to quaternary structure, homotetramer; disulfide-linked.

The protein resides in the membrane. Functionally, acetyl group-binding receptor which shows a calcium-dependent binding to acetylated structures such as chitin, some N-acetylated carbohydrates, and amino acids. The protein is Fibrinogen C domain-containing protein 1-A (fibcd1-a) of Xenopus laevis (African clawed frog).